A 480-amino-acid polypeptide reads, in one-letter code: Bifunctional protein GlmU (480 aa).

Residues 1 to 247 (MATPIDVVIM…AAQVAGVNSP (247 aa)) form a pyrophosphorylase region. UDP-N-acetyl-alpha-D-glucosamine contacts are provided by residues lysine 24, glutamine 86, 91–92 (GT), 113–115 (SGD), glycine 150, glutamate 172, and asparagine 245. Aspartate 115 is a Mg(2+) binding site. Residue asparagine 245 participates in Mg(2+) binding. Positions 248 to 268 (VQLAELERVYQLRQATALMEQ) are linker. The segment at 269 to 480 (GVRLADPARF…WKRPVKVSKG (212 aa)) is N-acetyltransferase. Residues arginine 355 and lysine 373 each coordinate UDP-N-acetyl-alpha-D-glucosamine. Histidine 385 acts as the Proton acceptor in catalysis. Residues tyrosine 388 and asparagine 399 each coordinate UDP-N-acetyl-alpha-D-glucosamine. Acetyl-CoA contacts are provided by residues alanine 402, 408-409 (NY), serine 427, glycine 445, and arginine 462.

The protein in the N-terminal section; belongs to the N-acetylglucosamine-1-phosphate uridyltransferase family. In the C-terminal section; belongs to the transferase hexapeptide repeat family. In terms of assembly, homotrimer. Mg(2+) is required as a cofactor.

The protein localises to the cytoplasm. The enzyme catalyses alpha-D-glucosamine 1-phosphate + acetyl-CoA = N-acetyl-alpha-D-glucosamine 1-phosphate + CoA + H(+). It carries out the reaction N-acetyl-alpha-D-glucosamine 1-phosphate + UTP + H(+) = UDP-N-acetyl-alpha-D-glucosamine + diphosphate. It functions in the pathway nucleotide-sugar biosynthesis; UDP-N-acetyl-alpha-D-glucosamine biosynthesis; N-acetyl-alpha-D-glucosamine 1-phosphate from alpha-D-glucosamine 6-phosphate (route II): step 2/2. The protein operates within nucleotide-sugar biosynthesis; UDP-N-acetyl-alpha-D-glucosamine biosynthesis; UDP-N-acetyl-alpha-D-glucosamine from N-acetyl-alpha-D-glucosamine 1-phosphate: step 1/1. Its pathway is bacterial outer membrane biogenesis; LPS lipid A biosynthesis. Catalyzes the last two sequential reactions in the de novo biosynthetic pathway for UDP-N-acetylglucosamine (UDP-GlcNAc). The C-terminal domain catalyzes the transfer of acetyl group from acetyl coenzyme A to glucosamine-1-phosphate (GlcN-1-P) to produce N-acetylglucosamine-1-phosphate (GlcNAc-1-P), which is converted into UDP-GlcNAc by the transfer of uridine 5-monophosphate (from uridine 5-triphosphate), a reaction catalyzed by the N-terminal domain. The chain is Bifunctional protein GlmU from Polaromonas sp. (strain JS666 / ATCC BAA-500).